We begin with the raw amino-acid sequence, 197 residues long: HTH-type transcriptional regulator BetI (197 aa).

An HTH tetR-type domain is found at 8–68; sequence PIRRQQLIEA…ATMRYLMSVL (61 aa). The H-T-H motif DNA-binding region spans 31–50; sequence SIALIARLAGVSNGIISHYF.

Its pathway is amine and polyamine biosynthesis; betaine biosynthesis via choline pathway [regulation]. Repressor involved in the biosynthesis of the osmoprotectant glycine betaine. It represses transcription of the choline transporter BetT and the genes of BetAB involved in the synthesis of glycine betaine. This Pseudomonas fluorescens (strain Pf0-1) protein is HTH-type transcriptional regulator BetI.